The sequence spans 285 residues: Malonyl-[acyl-carrier protein] O-methyltransferase (285 aa).

The protein belongs to the methyltransferase superfamily.

The enzyme catalyses malonyl-[ACP] + S-adenosyl-L-methionine = malonyl-[ACP] methyl ester + S-adenosyl-L-homocysteine. Its pathway is cofactor biosynthesis; biotin biosynthesis. In terms of biological role, converts the free carboxyl group of a malonyl-thioester to its methyl ester by transfer of a methyl group from S-adenosyl-L-methionine (SAM). It allows to synthesize pimeloyl-ACP via the fatty acid synthetic pathway. This chain is Malonyl-[acyl-carrier protein] O-methyltransferase, found in Bacillus cytotoxicus (strain DSM 22905 / CIP 110041 / 391-98 / NVH 391-98).